A 303-amino-acid polypeptide reads, in one-letter code: Ornithine carbamoyltransferase (303 aa).

Carbamoyl phosphate-binding positions include 52 to 55 (STRT), Gln-79, Arg-103, and 130 to 133 (HPCQ). Residues Asn-161, Asp-222, and 226 to 227 (SM) each bind L-ornithine. Carbamoyl phosphate contacts are provided by residues 262–263 (CL) and Arg-290.

It belongs to the aspartate/ornithine carbamoyltransferase superfamily. OTCase family.

It localises to the cytoplasm. It carries out the reaction carbamoyl phosphate + L-ornithine = L-citrulline + phosphate + H(+). It functions in the pathway amino-acid biosynthesis; L-arginine biosynthesis; L-arginine from L-ornithine and carbamoyl phosphate: step 1/3. Its function is as follows. Reversibly catalyzes the transfer of the carbamoyl group from carbamoyl phosphate (CP) to the N(epsilon) atom of ornithine (ORN) to produce L-citrulline. The polypeptide is Ornithine carbamoyltransferase (Geobacter sulfurreducens (strain ATCC 51573 / DSM 12127 / PCA)).